The following is a 740-amino-acid chain: ATP-dependent RNA helicase DDX1 (740 aa).

A necessary for interaction with HNRNPK region spans residues 1–295 (MAAFSEMGVM…APKALIVEPS (295 aa)). Positions 1–448 (MAAFSEMGVM…DTVHHVVVPV (448 aa)) are interaction with dsRNA. Positions 1 to 525 (MAAFSEMGVM…KIDCDNLEQY (525 aa)) are necessary for interaction with RELA. Positions 2–428 (AAFSEMGVMP…SEKIMHFPTW (427 aa)) constitute a Helicase ATP-binding domain. An ATP-binding site is contributed by 46-53 (AETGSGKT). Residues 70 to 247 (DQQEGKKGKA…LKFNFGEEEF (178 aa)) form the B30.2/SPRY domain. N6-acetyllysine occurs at positions 239 and 268. K281 carries the post-translational modification N6-acetyllysine; alternate. K281 participates in a covalent cross-link: Glycyl lysine isopeptide (Lys-Gly) (interchain with G-Cter in SUMO2); alternate. The DEAD box motif lies at 370-373 (DEAD). Residue S481 is modified to Phosphoserine. Residues 493 to 681 (KGEYAVRAIK…QVEPDIKVPV (189 aa)) form the Helicase C-terminal domain. The tract at residues 525–740 (YFMQQGGGPD…YLPNQLFRTF (216 aa)) is necessary for interaction with HNRNPK.

Belongs to the DEAD box helicase family. DDX1 subfamily. As to quaternary structure, found in a multi-helicase-TICAM1 complex at least composed of DHX36, DDX1, DDX21 and TICAM1; this complex exists in resting cells with or without poly(I:C) RNA ligand stimulation. Interacts with DHX36. Interacts (via B30.2/SPRY domain) with DDX21 (via N-terminus); this interaction serves as bridges to TICAM1. Interacts with FAM98A (via N- and C-terminus). Interacts with PHF5A (via C-terminus). Interacts with MBNL1. Interacts with CSTF2. Interacts with HNRNPK. Interacts with ATM. Interacts with RELA (via C-terminus). Component of the tRNA-splicing ligase complex. Interacts with PQBP1. Interacts with ERCC6. Phosphorylated by ATM kinase; phosphorylation is increased in response to ionizing radiation (IR).

The protein resides in the nucleus. It localises to the cytoplasm. Its subcellular location is the cytoplasmic granule. It is found in the cytosol. The protein localises to the mitochondrion. It carries out the reaction ATP + H2O = ADP + phosphate + H(+). Its function is as follows. Acts as an ATP-dependent RNA helicase, able to unwind both RNA-RNA and RNA-DNA duplexes. Possesses 5' single-stranded RNA overhang nuclease activity. Possesses ATPase activity on various RNA, but not DNA polynucleotides. May play a role in RNA clearance at DNA double-strand breaks (DSBs), thereby facilitating the template-guided repair of transcriptionally active regions of the genome. Together with RELA, acts as a coactivator to enhance NF-kappa-B-mediated transcriptional activation. Acts as a positive transcriptional regulator of cyclin CCND2 expression. Binds to the cyclin CCND2 promoter region. Associates with chromatin at the NF-kappa-B promoter region via association with RELA. Binds to poly(A) RNA. May be involved in 3'-end cleavage and polyadenylation of pre-mRNAs. Component of the tRNA-splicing ligase complex required to facilitate the enzymatic turnover of catalytic subunit RTCB: together with archease (ZBTB8OS), acts by facilitating the guanylylation of RTCB, a key intermediate step in tRNA ligation. Component of a multi-helicase-TICAM1 complex that acts as a cytoplasmic sensor of viral double-stranded RNA (dsRNA) and plays a role in the activation of a cascade of antiviral responses including the induction of pro-inflammatory cytokines via the adapter molecule TICAM1. Specifically binds (via helicase ATP-binding domain) on both short and long poly(I:C) dsRNA. This chain is ATP-dependent RNA helicase DDX1 (DDX1), found in Bos taurus (Bovine).